The sequence spans 358 residues: UDP-N-acetylglucosamine--N-acetylmuramyl-(pentapeptide) pyrophosphoryl-undecaprenol N-acetylglucosamine transferase (358 aa).

UDP-N-acetyl-alpha-D-glucosamine contacts are provided by residues 11 to 13, Asn125, Arg162, Ser196, and Gln288; that span reads TAG.

The protein belongs to the glycosyltransferase 28 family. MurG subfamily.

Its subcellular location is the cell membrane. The catalysed reaction is di-trans,octa-cis-undecaprenyl diphospho-N-acetyl-alpha-D-muramoyl-L-alanyl-D-glutamyl-meso-2,6-diaminopimeloyl-D-alanyl-D-alanine + UDP-N-acetyl-alpha-D-glucosamine = di-trans,octa-cis-undecaprenyl diphospho-[N-acetyl-alpha-D-glucosaminyl-(1-&gt;4)]-N-acetyl-alpha-D-muramoyl-L-alanyl-D-glutamyl-meso-2,6-diaminopimeloyl-D-alanyl-D-alanine + UDP + H(+). It functions in the pathway cell wall biogenesis; peptidoglycan biosynthesis. Its function is as follows. Cell wall formation. Catalyzes the transfer of a GlcNAc subunit on undecaprenyl-pyrophosphoryl-MurNAc-pentapeptide (lipid intermediate I) to form undecaprenyl-pyrophosphoryl-MurNAc-(pentapeptide)GlcNAc (lipid intermediate II). This chain is UDP-N-acetylglucosamine--N-acetylmuramyl-(pentapeptide) pyrophosphoryl-undecaprenol N-acetylglucosamine transferase, found in Leifsonia xyli subsp. xyli (strain CTCB07).